The primary structure comprises 1465 residues: Vacuolar heme ABC transmembrane exporter abc3 (1465 aa).

The Extracellular portion of the chain corresponds to 1-8 (MITANKGL). A helical membrane pass occupies residues 9 to 29 (SLVLLIPNLFALVSGGLQYVF). At 30 to 42 (DVRRRIFRPHFSQ) the chain is on the cytoplasmic side. The chain crosses the membrane as a helical span at residues 43–63 (FWTIWMKFFSIALVIITQIYV). The Extracellular portion of the chain corresponds to 64-69 (GYKTKN). The chain crosses the membrane as a helical span at residues 70 to 90 (IGWNFFSVVTYCFVLFLQFAE). At 91 to 97 (QSTLRVP) the chain is on the cytoplasmic side. The chain crosses the membrane as a helical span at residues 98 to 118 (MASLLIFWLLKVVTSLLILLF). Over 119–129 (SPYIAITSMAR) the chain is Extracellular. The chain crosses the membrane as a helical span at residues 130–150 (LLTLITLFCSLVCFISEVYVP). 151–152 (PC) lines the heme pocket. The Cytoplasmic segment spans residues 151-235 (PCNRVWYSDD…IYHSKNKRRS (85 aa)). A helical transmembrane segment spans residues 236-256 (LFLWKLLFFNHWKLVALITIT). The ABC transmembrane type-1 1 domain maps to 250–539 (VALITITKLI…LPTVISSLLE (290 aa)). At 257–291 (KLIQDVLAFVQPTLIQKTILFISSYTSPNPESPSR) the chain is on the extracellular side. The chain crosses the membrane as a helical span at residues 292–312 (GFIIAILVLVANFLQTLLLQQ). The Cytoplasmic portion of the chain corresponds to 313 to 362 (YNQLIMLLGMRWKTELLASIYRKSLLLSSSARQNRSIGDIINYMAVDTQK). Residues 363–383 (ISDLPIYLFIIVSGPFQIALA) traverse the membrane as a helical segment. Residues 384 to 394 (LSNLYHLMGYS) lie on the Extracellular side of the membrane. Residues 395 to 415 (AFTGVAASVILFPCNIIVANV) form a helical membrane-spanning segment. The Cytoplasmic portion of the chain corresponds to 416-480 (YKKFQSILMK…KIGFITAIGD (65 aa)). Residues 481–501 (FAWIFTTIIVTTVAFGAFIIF) form a helical membrane-spanning segment. Over 502-511 (HGKTQALTAD) the chain is Extracellular. Residues 512-532 (IVFPAVSLFNLLQFPLAMLPT) form a helical membrane-spanning segment. The Cytoplasmic portion of the chain corresponds to 533–899 (VISSLLEASV…VYWMYFKSCS (367 aa)). The ABC transporter 1 domain occupies 575-804 (LEIKSGTFSW…TNSELKQQLS (230 aa)). 614-621 (GKVGAGKS) provides a ligand contact to ATP. 2 disordered regions span residues 805–824 (EFND…SYPS) and 840–869 (TYSS…TEDD). Residues 900-920 (IGLILLYFFFIISGIMMNVAT) traverse the membrane as a helical segment. The region spanning 903 to 1189 (ILLYFFFIIS…IVQQSVDAEN (287 aa)) is the ABC transmembrane type-1 2 domain. At 921–939 (NVWLKHWSEENGKSSSELN) the chain is on the extracellular side. Residues 940–960 (PSPYFYLGIYLFFGFLSCAFI) traverse the membrane as a helical segment. Residues 961–1033 (SSSSLTMTVL…FFFRNSIQVL (73 aa)) lie on the Cytoplasmic side of the membrane. The chain crosses the membrane as a helical span at residues 1034 to 1054 (FILGVICYSAPLSLLLIVPLF). At 1055 to 1465 (FLYLYNRAYY…YSLAKESGLI (411 aa)) the chain is on the extracellular side. The region spanning 1226–1460 (VSFNHYSAKY…KDSMFYSLAK (235 aa)) is the ABC transporter 2 domain. 1260–1267 (GRTGAGKS) contacts ATP.

This sequence belongs to the ABC transporter superfamily.

The protein resides in the vacuole membrane. Iron-regulated vacuolar transporter that mobilizes stored heme from the vacuole to the cytosol in response to iron deficiency. The protein is Vacuolar heme ABC transmembrane exporter abc3 of Schizosaccharomyces pombe (strain 972 / ATCC 24843) (Fission yeast).